The chain runs to 390 residues: Fluoride export protein 1 (390 aa).

The interval 1-22 (MVAPLVSESQSSSIEETDEQQQ) is disordered. Residues 1–72 (MVAPLVSESQ…RFLDKTQKYY (72 aa)) lie on the Cytoplasmic side of the membrane. Residues 73–93 (PVILNIVHGAIWGVLVRKGLM) traverse the membrane as a helical segment. At 94-100 (SLTTYSG) the chain is on the extracellular side. The helical transmembrane segment at 101-121 (SFLSGVIWANFAACVVMGLAI) threads the bilayer. Residues 122–143 (DGEVFWIRLLEEKDYPNKGAIP) are Cytoplasmic-facing. A helical membrane pass occupies residues 144–164 (VYTGLTTGFCGTVSSFSSVIL). Topologically, residues 165-185 (EAFNKAADTDIGVRHHYPNGA) are extracellular. A helical transmembrane segment spans residues 186-206 (YGIMQFLAVILAQFGLSIMGF). Residues 207–229 (HMGKQFSAVVDNYLPLVTKRIYK) lie on the Cytoplasmic side of the membrane. A helical membrane pass occupies residues 230-250 (VLELTSMILGVVLVVITCILI). Topologically, residues 251–256 (GVKKQG) are extracellular. The chain crosses the membrane as a helical span at residues 257–279 (SWRSWTFSMLFAPFGALLRYYLS). Topologically, residues 280 to 290 (KFLNNKVSNFP) are cytoplasmic. A helical transmembrane segment spans residues 291–311 (LGTFTANFLGTLLLAVFTLLA). Topologically, residues 312–338 (RGKLPGGKGHIVTNTIALHVLEGLDDG) are extracellular. The chain crosses the membrane as a helical span at residues 339–359 (FCGGLTTVSTFVVELFGLKTL). Topologically, residues 360–368 (FSYRYGTIS) are cytoplasmic. The chain crosses the membrane as a helical span at residues 369-389 (ILVCFAGVVLILGSYNWSVGL). Residue D390 is a topological domain, extracellular.

Belongs to the fluoride channel Fluc/FEX (TC 1.A.43) family.

It localises to the cell membrane. It carries out the reaction fluoride(in) = fluoride(out). In terms of biological role, fluoride channel required for the rapid expulsion of cytoplasmic fluoride. This chain is Fluoride export protein 1, found in Candida albicans (strain SC5314 / ATCC MYA-2876) (Yeast).